The following is a 366-amino-acid chain: 1-aminocyclopropane-1-carboxylate oxidase homolog 12 (366 aa).

One can recognise a Fe2OG dioxygenase domain in the interval 215-314; that stretch reads KTLLMICHYY…RISVASFFSS (100 aa). The Fe cation site is built by His-239, Asp-241, and His-295. Residue Arg-305 coordinates 2-oxoglutarate.

The protein belongs to the iron/ascorbate-dependent oxidoreductase family. Requires Fe(2+) as cofactor.

This is 1-aminocyclopropane-1-carboxylate oxidase homolog 12 from Arabidopsis thaliana (Mouse-ear cress).